The primary structure comprises 87 residues: U14-lycotoxin-Ls1a (87 aa).

Residues 1–20 (MNSKVFAVLLLLALSTCVLS) form the signal peptide. The region spanning 21-66 (EKYCPTPRNTSCKKMNIRNNCCRDSDCTSNAFCCAEPCGNFCHKAS) is the WAP domain. 5 disulfides stabilise this stretch: C24–C54, C32–C58, C41–C53, C42–C80, and C47–C62.

The protein belongs to the venom protein 11 family. 01 (wap-1) subfamily. Post-translationally, contains 5 disulfide bonds. In terms of tissue distribution, expressed by the venom gland.

It localises to the secreted. Its function is as follows. Has antibacterial activity. This is U14-lycotoxin-Ls1a from Lycosa singoriensis (Wolf spider).